The sequence spans 559 residues: MTTPSKFRDIEIRAPRGTTLTAKSWLTEAPLRMLMNNLDPEVAENPRELVVYGGIGRAARNWECYDRIVETLKQLNDDETLLVQSGKPVGVFKTHANAPRVLIANSNLVPHWATWEHFNELDAKGLAMYGQMTAGSWIYIGSQGIVQGTYETFVEAGRQHYDGNLKGRWVLTAGLGGMGGAQPLAATLAGACSLNIECQQSRIDFRLRSRYVDEQAKDLDDALARIQRYTAEGKAISIALLGNAAEILPELVRRGVRPDMVTDQTSAHDPLNGYLPAGWSWEEYRDRAQTDPAAVVKAAKQSMAVHVRAMLAFQQQGVPTFDYGNNIRQMAKEEGVANAFDFPGFVPAYIRPLFCRGIGPFRWAALSGDPQDIYKTDAKVKQLIPDDAHLHRWLDMARERISFQGLPARICWVGLGLRAKLGLAFNEMVRSGELSAPIVIGRDHLDSGSVASPNRETEAMQDGSDAVSDWPLLNALLNTASGATWVSLHHGGGVGMGFSQHSGMVIVCDGSDEAAERIARVLTNDPGTGVMRHADAGYQVAIDCAKEQGLNLPMITAQR.

Residues 53–54 (GG), Gln131, 177–179 (GMG), Glu197, Arg202, 243–244 (NA), 264–268 (QTSAH), 274–275 (YL), and Tyr323 contribute to the NAD(+) site. Residue Cys411 is part of the active site. Gly493 contributes to the NAD(+) binding site.

This sequence belongs to the urocanase family. The cofactor is NAD(+).

It is found in the cytoplasm. It carries out the reaction 4-imidazolone-5-propanoate = trans-urocanate + H2O. It functions in the pathway amino-acid degradation; L-histidine degradation into L-glutamate; N-formimidoyl-L-glutamate from L-histidine: step 2/3. In terms of biological role, catalyzes the conversion of urocanate to 4-imidazolone-5-propionate. The sequence is that of Urocanate hydratase from Pseudomonas aeruginosa (strain LESB58).